Consider the following 96-residue polypeptide: Co-chaperonin GroES (96 aa).

The protein belongs to the GroES chaperonin family. As to quaternary structure, heptamer of 7 subunits arranged in a ring. Interacts with the chaperonin GroEL.

Its subcellular location is the cytoplasm. Functionally, together with the chaperonin GroEL, plays an essential role in assisting protein folding. The GroEL-GroES system forms a nano-cage that allows encapsulation of the non-native substrate proteins and provides a physical environment optimized to promote and accelerate protein folding. GroES binds to the apical surface of the GroEL ring, thereby capping the opening of the GroEL channel. The polypeptide is Co-chaperonin GroES (Polaromonas sp. (strain JS666 / ATCC BAA-500)).